The following is an 858-amino-acid chain: Ubiquitin carboxyl-terminal hydrolase 5 (858 aa).

Ala2 carries the post-translational modification N-acetylalanine. Residues Arg74 to Pro96 form a disordered region. A Glycyl lysine isopeptide (Lys-Gly) (interchain with G-Cter in SUMO) cross-link involves residue Lys113. Phosphoserine occurs at positions 149 and 156. The UBP-type; degenerate zinc finger occupies Gln175 to Met283. Residues Cys195 and Cys816 are joined by a disulfide bond. Zn(2+)-binding residues include Cys199 and Cys202. Trp209 lines the substrate pocket. Residue Cys219 coordinates Zn(2+). Arg221–Phe224 serves as a coordination point for substrate. His232 lines the Zn(2+) pocket. Substrate contacts are provided by Tyr259, Tyr261, and Asp264. A Phosphothreonine modification is found at Thr292. The 531-residue stretch at Thr326–Val856 folds into the USP domain. Cys335 (nucleophile) is an active-site residue. Thr623 bears the Phosphothreonine mark. UBA domains lie at Met654–His695 and Pro722–His762. 3 positions are modified to phosphoserine: Ser779, Ser783, and Ser785. Catalysis depends on His818, which acts as the Proton acceptor.

It belongs to the peptidase C19 family. Homodimer. Interacts with TRIML1. Post-translationally, ubiquitinated by SMURF1; leading to proteasomal degradation. SUMOylated at Lys-113; SUMOylation affects the interaction with Cav3.2 channels.

It is found in the cytoplasm. It localises to the stress granule. The protein localises to the nucleus. The enzyme catalyses Thiol-dependent hydrolysis of ester, thioester, amide, peptide and isopeptide bonds formed by the C-terminal Gly of ubiquitin (a 76-residue protein attached to proteins as an intracellular targeting signal).. Deubiquitinating enzyme that participates in a wide range of cellular processes by specifically cleaving isopeptide bonds between ubiquitin and substrate proteins or ubiquitin itself. Affects thereby important cellular signaling pathways such as NF-kappa-B, Wnt/beta-catenin, and cytokine production by regulating ubiquitin-dependent protein degradation. Participates in the activation of the Wnt signaling pathway by promoting FOXM1 deubiquitination and stabilization that induces the recruitment of beta-catenin to Wnt target gene promoter. Regulates the assembly and disassembly of heat-induced stress granules by mediating the hydrolysis of unanchored ubiquitin chains. Promotes lipopolysaccharide-induced apoptosis and inflammatory response by stabilizing the TXNIP protein. Affects T-cell biology by stabilizing the inhibitory receptor on T-cells PDC1. Acts as a negative regulator of autophagy by regulating ULK1 at both protein and mRNA levels. Acts also as a negative regulator of type I interferon production by simultaneously removing both 'Lys-48'-linked unanchored and 'Lys-63'-linked anchored polyubiquitin chains on the transcription factor IRF3. Modulates the stability of DNA mismatch repair protein MLH1 and counteracts the effect of the ubiquitin ligase UBR4. Upon activation by insulin, it gets phosphorylated through mTORC1-mediated phosphorylation to enhance YTHDF1 stability by removing 'Lys-11'-linked polyubiquitination. May also deubiquitinate other substrates such as the calcium channel CACNA1H. This chain is Ubiquitin carboxyl-terminal hydrolase 5 (USP5), found in Homo sapiens (Human).